The chain runs to 248 residues: 2,3-bisphosphoglycerate-dependent phosphoglycerate mutase (248 aa).

Substrate contacts are provided by residues 8 to 15 (RHGESTWN), 21 to 22 (TG), arginine 60, 87 to 90 (ERHY), lysine 98, and 114 to 115 (RR). The Tele-phosphohistidine intermediate role is filled by histidine 9. Glutamate 87 serves as the catalytic Proton donor/acceptor. The disordered stretch occupies residues 118 to 137 (DTPPPALEPTDPRASYDDPR). Positions 127 to 137 (TDPRASYDDPR) are enriched in basic and acidic residues. Substrate is bound at residue 183-184 (GN).

This sequence belongs to the phosphoglycerate mutase family. BPG-dependent PGAM subfamily. In terms of assembly, homodimer.

The enzyme catalyses (2R)-2-phosphoglycerate = (2R)-3-phosphoglycerate. Its pathway is carbohydrate degradation; glycolysis; pyruvate from D-glyceraldehyde 3-phosphate: step 3/5. In terms of biological role, catalyzes the interconversion of 2-phosphoglycerate and 3-phosphoglycerate. This is 2,3-bisphosphoglycerate-dependent phosphoglycerate mutase from Cupriavidus necator (strain ATCC 17699 / DSM 428 / KCTC 22496 / NCIMB 10442 / H16 / Stanier 337) (Ralstonia eutropha).